The chain runs to 407 residues: Probable cysteine protease atg4 (407 aa).

The active-site Nucleophile is the Cys-136. Catalysis depends on residues Asp-310 and His-312.

It belongs to the peptidase C54 family.

It is found in the cytoplasm. The protein resides in the nucleus. It localises to the preautophagosomal structure. It catalyses the reaction [protein]-C-terminal L-amino acid-glycyl-phosphatidylethanolamide + H2O = [protein]-C-terminal L-amino acid-glycine + a 1,2-diacyl-sn-glycero-3-phosphoethanolamine. Cysteine protease that is required for autophagy. Plays a key role in cytoplasm to vacuole transport (Cvt) and autophagy by mediating both proteolytic activation and delipidation of atg8. The protease activity is required for proteolytic activation of atg8 by the cleavage of the C-terminal amino acid of atg8 to reveal a C-terminal glycine. Azg8 ubiquitin-like activity requires the exposure of the glycine at the C-terminus for its conjugation to phosphatidylethanolamine (PE) and its insertion to membranes, which is necessary for autophagy. The atg8-PE conjugate mediates tethering between adjacent membranes and stimulates membrane hemifusion, leading to expansion of the autophagosomal membrane during autophagy. In addition to the protease activity, also catalyzes deconjugation of PE-conjugated forms of atg8 during macroautophagy since atg8 delipidation is required to release the protein from membranes, which facilitates multiple events during macroautophagy, and especially for efficient autophagosome biogenesis, the assembly of atg99-containing tubulovesicular clusters into phagophores/autophagosomes, and for the disassembly of PAS-associated ATG components. Atg8 delipidation by atg4 also recycles atg8-PE generated on inappropriate membranes to maintain a reservoir of unlipidated atg8 that is required for autophagosome formation at the PAS. The chain is Probable cysteine protease atg4 from Aspergillus oryzae (strain ATCC 42149 / RIB 40) (Yellow koji mold).